Consider the following 482-residue polypeptide: Putative L-cysteine desulfhydrase 1 (482 aa).

Residues 1-10 show a composition bias toward acidic residues; the sequence is MASIPPDDDA. The tract at residues 1–45 is disordered; sequence MASIPPDDDAAAAAAAGAAENGYGNGKGNGNGPAPRPPPAKRPRS. Low complexity predominate over residues 11 to 22; the sequence is AAAAAAGAAENG. Lys-276 carries the N6-(pyridoxal phosphate)lysine modification.

The protein belongs to the class-V pyridoxal-phosphate-dependent aminotransferase family. Requires pyridoxal 5'-phosphate as cofactor.

The enzyme catalyses L-cysteine + H2O = hydrogen sulfide + pyruvate + NH4(+) + H(+). In terms of biological role, catalyzes the production of hydrogen sulfide (H2S) from cysteine. In Oryza sativa subsp. japonica (Rice), this protein is Putative L-cysteine desulfhydrase 1.